Here is a 1335-residue protein sequence, read N- to C-terminus: Phospholipid-transporting ATPase IK (1335 aa).

Residues 1–74 (MDGVHLGENL…LYEQFHRMSN (74 aa)) are Cytoplasmic-facing. The helical transmembrane segment at 75–95 (LYFLFIIILQGIPEISTLPWF) threads the bilayer. The Exoplasmic loop segment spans residues 96-295 (TLFAPLVCLF…LDLMMNKLVA (200 aa)). The chain crosses the membrane as a helical span at residues 296–316 (LIFLSLVIASLLLTVGFTFMV). Residues 317–339 (KQFKAKHYYMSPTHGRSDAMESF) are Cytoplasmic-facing. Residues 340–360 (FIFWGFLILLSVMVPMAMFII) traverse the membrane as a helical segment. At 361–917 (AEFIYLGNSI…YMRVCKFLRY (557 aa)) the chain is on the exoplasmic loop side. The 4-aspartylphosphate intermediate role is filled by Asp-407. ATP-binding residues include Asp-407, Lys-408, Thr-409, Glu-504, Phe-545, Lys-568, Arg-601, Thr-681, Gly-682, Asp-683, Arg-831, and Lys-837. Asp-407 lines the Mg(2+) pocket. Thr-409 lines the Mg(2+) pocket. Asp-857 serves as a coordination point for Mg(2+). ATP contacts are provided by Asn-860 and Asp-861. Residue Asp-861 participates in Mg(2+) binding. The helical transmembrane segment at 918–938 (FFYKTVASMMAQIWFSLVNGF) threads the bilayer. Residues 939–946 (SAQPLYEG) are Cytoplasmic-facing. Residues 947–967 (WFLALFNLLYSTLPVLYIGLF) traverse the membrane as a helical segment. Topologically, residues 968–995 (EQDVTAEKSLKMPELYMAGQKGELFNYS) are exoplasmic loop. A helical transmembrane segment spans residues 996–1016 (IFMQAITHGTITSMINFFVTV). Residues 1017 to 1033 (MVSSDMSKAGSSHDYQS) are Cytoplasmic-facing. A helical transmembrane segment spans residues 1034–1054 (LGVLVAISSLLSVTLEVMLVV). Residue Lys-1055 is a topological domain, exoplasmic loop. Residues 1056 to 1076 (YWTLLFVGAVVLSLSSYVLMT) traverse the membrane as a helical segment. At 1077–1104 (SLTQSLWMYRISPKTFPFLFADYNVLFE) the chain is on the cytoplasmic side. The helical transmembrane segment at 1105–1125 (PCSLLLIVLNVALNVLPMLAL) threads the bilayer. Over 1126-1335 (RTIHRTVLKQ…SQLEVPRKQS (210 aa)) the chain is Exoplasmic loop. Disordered stretches follow at residues 1192-1215 (VDDS…PLQN), 1236-1280 (FGKG…GKLL), and 1314-1335 (SPLW…RKQS). Polar residues-rich tracts occupy residues 1246–1255 (PNTSSQTMEK) and 1266–1276 (QKLPTTTSATS).

Belongs to the cation transport ATPase (P-type) (TC 3.A.3) family. Type IV subfamily. Requires Mg(2+) as cofactor. Expressed in testis, specifically in spermatids within seminiferous tubules (at protein level).

It localises to the cytoplasmic vesicle. The protein localises to the secretory vesicle. It is found in the acrosome membrane. Its subcellular location is the endoplasmic reticulum membrane. The enzyme catalyses ATP + H2O + phospholipidSide 1 = ADP + phosphate + phospholipidSide 2.. The catalysed reaction is a 1,2-diacyl-sn-glycero-3-phospho-L-serine(out) + ATP + H2O = a 1,2-diacyl-sn-glycero-3-phospho-L-serine(in) + ADP + phosphate + H(+). In terms of biological role, P4-ATPase flippase which catalyzes the hydrolysis of ATP coupled to the transport of aminophospholipids from the outer to the inner leaflet of various membranes and ensures the maintenance of asymmetric distribution of phospholipids. Phospholipid translocation also seems to be implicated in vesicle formation and in uptake of lipid signaling molecules. May be responsible for the maintenance of asymmetric distribution of phosphatidylserine (PS) in spermatozoa membranes. Involved in acrosome reactions and binding of spermatozoa to zona pellucida. This Mus musculus (Mouse) protein is Phospholipid-transporting ATPase IK.